Reading from the N-terminus, the 98-residue chain is NADH-ubiquinone oxidoreductase chain 4L (98 aa).

3 helical membrane passes run 1-21 (MIPTYMNIMLAFTISLLGMLI), 29-49 (SLLCLEGMMMSLFIMTTLIAL), and 61-81 (IILLVFAACEAAVGLALLVSI).

The protein belongs to the complex I subunit 4L family. Core subunit of respiratory chain NADH dehydrogenase (Complex I) which is composed of 45 different subunits.

The protein localises to the mitochondrion inner membrane. It carries out the reaction a ubiquinone + NADH + 5 H(+)(in) = a ubiquinol + NAD(+) + 4 H(+)(out). Its function is as follows. Core subunit of the mitochondrial membrane respiratory chain NADH dehydrogenase (Complex I) which catalyzes electron transfer from NADH through the respiratory chain, using ubiquinone as an electron acceptor. Part of the enzyme membrane arm which is embedded in the lipid bilayer and involved in proton translocation. The protein is NADH-ubiquinone oxidoreductase chain 4L (MT-ND4L) of Macaca ochreata (Booted macaque).